The following is a 473-amino-acid chain: Glutamate--tRNA ligase 1 (473 aa).

Residues 10-20 (PSPTGFLHIGG) carry the 'HIGH' region motif. The 'KMSKS' region motif lies at 252–256 (KLSKR). Lys-255 is an ATP binding site.

The protein belongs to the class-I aminoacyl-tRNA synthetase family. Glutamate--tRNA ligase type 1 subfamily. As to quaternary structure, monomer.

It is found in the cytoplasm. It catalyses the reaction tRNA(Glu) + L-glutamate + ATP = L-glutamyl-tRNA(Glu) + AMP + diphosphate. Its function is as follows. Catalyzes the attachment of glutamate to tRNA(Glu) in a two-step reaction: glutamate is first activated by ATP to form Glu-AMP and then transferred to the acceptor end of tRNA(Glu). The polypeptide is Glutamate--tRNA ligase 1 (Wolbachia pipientis wMel).